Reading from the N-terminus, the 1403-residue chain is Protein FAM135B (1403 aa).

4 disordered regions span residues 445–483 (EKNLINQNSSSRKDIPLSTTEAPQLGSDEDVTRRPEVQE), 514–548 (EDECWTGPRPDAVKDSLTDTDICSRSPGPDEGQTP), 648–669 (REALDTKPSQPDHAEEPEDLSA), and 718–740 (RHAHHRNSLEGGHTESNTSLPSG). Basic and acidic residues predominate over residues 649-661 (EALDTKPSQPDHA). Residues 731-740 (TESNTSLPSG) are compositionally biased toward polar residues. Phosphoserine is present on residues Ser-775 and Ser-776. The disordered stretch occupies residues 790–819 (TAGFSEDLDPSSKENSPPRHTSLSYGGSRV). Residues 802-814 (KENSPPRHTSLSY) are compositionally biased toward polar residues.

It belongs to the FAM135 family.

The chain is Protein FAM135B (Fam135b) from Mus musculus (Mouse).